A 163-amino-acid chain; its full sequence is SsrA-binding protein (163 aa).

The protein belongs to the SmpB family.

It is found in the cytoplasm. In terms of biological role, required for rescue of stalled ribosomes mediated by trans-translation. Binds to transfer-messenger RNA (tmRNA), required for stable association of tmRNA with ribosomes. tmRNA and SmpB together mimic tRNA shape, replacing the anticodon stem-loop with SmpB. tmRNA is encoded by the ssrA gene; the 2 termini fold to resemble tRNA(Ala) and it encodes a 'tag peptide', a short internal open reading frame. During trans-translation Ala-aminoacylated tmRNA acts like a tRNA, entering the A-site of stalled ribosomes, displacing the stalled mRNA. The ribosome then switches to translate the ORF on the tmRNA; the nascent peptide is terminated with the 'tag peptide' encoded by the tmRNA and targeted for degradation. The ribosome is freed to recommence translation, which seems to be the essential function of trans-translation. The protein is SsrA-binding protein of Shewanella sp. (strain ANA-3).